The following is a 90-amino-acid chain: MAKGQSLQDPFLNALRRERVPVSIYLVNGIKLQGQVESFDQFVILLKNTVSQMVYKHAISTVVPARPFNVTGHQNAQGGYGAQDDAPSGE.

The Sm domain maps to 9 to 68 (DPFLNALRRERVPVSIYLVNGIKLQGQVESFDQFVILLKNTVSQMVYKHAISTVVPARPF).

The protein belongs to the Hfq family. As to quaternary structure, homohexamer.

Its function is as follows. RNA chaperone that binds small regulatory RNA (sRNAs) and mRNAs to facilitate mRNA translational regulation in response to envelope stress, environmental stress and changes in metabolite concentrations. Also binds with high specificity to tRNAs. In Shewanella baltica (strain OS155 / ATCC BAA-1091), this protein is RNA-binding protein Hfq.